Here is a 574-residue protein sequence, read N- to C-terminus: Urease subunit alpha (574 aa).

The region spanning 131-574 is the Urease domain; that stretch reads GAIDSHIHFI…LPMAQRYLLI (444 aa). Histidine 136, histidine 138, and lysine 219 together coordinate Ni(2+). The residue at position 219 (lysine 219) is an N6-carboxylysine. Histidine 221 contributes to the substrate binding site. Residues histidine 248 and histidine 274 each coordinate Ni(2+). Histidine 322 (proton donor) is an active-site residue. Residue aspartate 362 coordinates Ni(2+).

Belongs to the metallo-dependent hydrolases superfamily. Urease alpha subunit family. As to quaternary structure, heterotrimer of UreA (gamma), UreB (beta) and UreC (alpha) subunits. Three heterotrimers associate to form the active enzyme. Ni cation serves as cofactor. Post-translationally, carboxylation allows a single lysine to coordinate two nickel ions.

It is found in the cytoplasm. It catalyses the reaction urea + 2 H2O + H(+) = hydrogencarbonate + 2 NH4(+). Its pathway is nitrogen metabolism; urea degradation; CO(2) and NH(3) from urea (urease route): step 1/1. The chain is Urease subunit alpha from Prochlorococcus marinus (strain MIT 9303).